Reading from the N-terminus, the 250-residue chain is MVMTNGKLILLRHGQSAWNASNQFTGWVDVDLTTIGEAEAKRGGELLVENNVLPDVVYTSLLRRAIRTANLALDAADRHWIPVVRDWRLNERHYGALQGLNKAETKDKYGDEQYMAWRRSYGTPPPELADDAEYSQAGDVRYKDLESVPRTECLKDVVERFIPYFEEEILPRVKKGENVLIAAHGNSLRALVKHLDNISDDDIAELNIPTGIPLVYEITPEGTVVNPGGTYLDPEAAAAGAAAVANQGGK.

Residues 12–19, 25–26, Arg-64, 91–94, Lys-102, 118–119, and 185–186 each bind substrate; these read RHGQSAWN, TG, ERHY, RR, and GN. Residue His-13 is the Tele-phosphohistidine intermediate of the active site. The active-site Proton donor/acceptor is the Glu-91.

It belongs to the phosphoglycerate mutase family. BPG-dependent PGAM subfamily.

It carries out the reaction (2R)-2-phosphoglycerate = (2R)-3-phosphoglycerate. It functions in the pathway carbohydrate degradation; glycolysis; pyruvate from D-glyceraldehyde 3-phosphate: step 3/5. Its function is as follows. Catalyzes the interconversion of 2-phosphoglycerate and 3-phosphoglycerate. The protein is 2,3-bisphosphoglycerate-dependent phosphoglycerate mutase of Corynebacterium efficiens (strain DSM 44549 / YS-314 / AJ 12310 / JCM 11189 / NBRC 100395).